A 524-amino-acid polypeptide reads, in one-letter code: Cytochrome P450 monooxygenase patH (524 aa).

At 1 to 4 the chain is on the cytoplasmic side; that stretch reads MEPM. The helical transmembrane segment at 5–23 threads the bilayer; it reads LLLILVAAVVLLFVRWAFV. Residues 24–524 lie on the Lumenal side of the membrane; that stretch reads YGHRTSNMPK…KEVFSQFTEG (501 aa). Asn191 is a glycosylation site (N-linked (GlcNAc...) asparagine). A heme-binding site is contributed by Cys442. Asn499 is a glycosylation site (N-linked (GlcNAc...) asparagine).

It belongs to the cytochrome P450 family. The cofactor is heme.

The protein localises to the endoplasmic reticulum membrane. It catalyses the reaction 3-methylphenol + reduced [NADPH--hemoprotein reductase] + O2 = 3-hydroxybenzyl alcohol + oxidized [NADPH--hemoprotein reductase] + H2O + H(+). The protein operates within mycotoxin biosynthesis; patulin biosynthesis. In terms of biological role, cytochrome P450 monooxygenase; part of the gene cluster that mediates the biosynthesis of patulin, an acetate-derived tetraketide mycotoxin produced by several fungal species that shows antimicrobial properties against several bacteria. PatH catalyzes the conversion of m-cresol into m-hydroxybenzyl alcohol. The pathway begins with the synthesis of 6-methylsalicylic acid by the polyketide synthase (PKS) patK via condensation of acetate and malonate units. The 6-methylsalicylic acid decarboxylase patG then catalyzes the decarboxylation of 6-methylsalicylic acid to yield m-cresol (also known as 3-methylphenol). These first reactions occur in the cytosol. The intermediate m-cresol is then transported into the endoplasmic reticulum where the cytochrome P450 monooxygenase patH converts it to m-hydroxybenzyl alcohol, which is further converted to gentisyl alcohol by the cytochrome P450 monooxygenase patI. The oxidoreductases patJ and patO further convert gentisyl alcohol to isoepoxydon in the vacuole. PatN catalyzes then the transformation of isoepoxydon into phyllostine. The cluster protein patF is responsible for the conversion from phyllostine to neopatulin whereas the alcohol dehydrogenase patD converts neopatulin to E-ascladiol. The steps between isoepoxydon and E-ascladiol occur in the cytosol, and E-ascladiol is probably secreted to the extracellular space by one of the cluster-specific transporters patC or patM. Finally, the secreted patulin synthase patE catalyzes the conversion of E-ascladiol to patulin. The polypeptide is Cytochrome P450 monooxygenase patH (Aspergillus clavatus (strain ATCC 1007 / CBS 513.65 / DSM 816 / NCTC 3887 / NRRL 1 / QM 1276 / 107)).